The primary structure comprises 115 residues: Large ribosomal subunit protein uL22c (115 aa).

Belongs to the universal ribosomal protein uL22 family. As to quaternary structure, part of the 50S ribosomal subunit.

It localises to the plastid. The protein localises to the chloroplast. In terms of biological role, this protein binds specifically to 23S rRNA. The globular domain of the protein is located near the polypeptide exit tunnel on the outside of the subunit, while an extended beta-hairpin is found that lines the wall of the exit tunnel in the center of the 70S ribosome. The sequence is that of Large ribosomal subunit protein uL22c (rpl22) from Thalassiosira pseudonana (Marine diatom).